Here is a 252-residue protein sequence, read N- to C-terminus: Protein HEAT-INDUCED TAS1 TARGET 2 (252 aa).

The protein belongs to the heat induced plant HTT protein family. As to expression, expressed ubiquitously, including in seedlings, leaves, stems, inflorescences and siliques.

It is found in the cytoplasm. The protein localises to the nucleus. In terms of biological role, mediates both basal and acquired thermotolerance via HSFA1s-directed pathways (e.g. HSFA1A, HSFA1B, and HSFA1D). Triggers the expression of HSFA1A and HSFA1B. The chain is Protein HEAT-INDUCED TAS1 TARGET 2 from Arabidopsis thaliana (Mouse-ear cress).